The sequence spans 481 residues: UDP-N-acetylmuramoyl-L-alanyl-D-glutamate--L-lysine ligase (481 aa).

Serine 42 lines the UDP-N-acetyl-alpha-D-muramoyl-L-alanyl-D-glutamate pocket. Position 118–124 (118–124 (GTKGKTT)) interacts with ATP. UDP-N-acetyl-alpha-D-muramoyl-L-alanyl-D-glutamate-binding positions include glutamine 158, 160–161 (TT), serine 187, and arginine 195. Lysine 229 carries the post-translational modification N6-carboxylysine. The L-lysine recognition motif motif lies at 404-407 (DDPN).

The protein belongs to the MurCDEF family. MurE subfamily. Carboxylation is probably crucial for Mg(2+) binding and, consequently, for the gamma-phosphate positioning of ATP.

The protein resides in the cytoplasm. It carries out the reaction UDP-N-acetyl-alpha-D-muramoyl-L-alanyl-D-glutamate + L-lysine + ATP = UDP-N-acetyl-alpha-D-muramoyl-L-alanyl-gamma-D-glutamyl-L-lysine + ADP + phosphate + H(+). The protein operates within cell wall biogenesis; peptidoglycan biosynthesis. Its function is as follows. Catalyzes the addition of L-lysine to the nucleotide precursor UDP-N-acetylmuramoyl-L-alanyl-D-glutamate (UMAG) in the biosynthesis of bacterial cell-wall peptidoglycan. The chain is UDP-N-acetylmuramoyl-L-alanyl-D-glutamate--L-lysine ligase from Streptococcus pyogenes serotype M4 (strain MGAS10750).